The primary structure comprises 513 residues: Putative ribose/galactose/methyl galactoside import ATP-binding protein 2 (513 aa).

ABC transporter domains follow at residues 24 to 260 (LSAE…VGRE) and 270 to 510 (VPIG…VMEL). 56 to 63 (GENGAGKS) is a binding site for ATP.

The protein belongs to the ABC transporter superfamily. Carbohydrate importer 2 (CUT2) (TC 3.A.1.2) family.

The protein localises to the cell inner membrane. It carries out the reaction D-ribose(out) + ATP + H2O = D-ribose(in) + ADP + phosphate + H(+). The catalysed reaction is D-galactose(out) + ATP + H2O = D-galactose(in) + ADP + phosphate + H(+). In terms of biological role, part of an ABC transporter complex involved in carbohydrate import. Could be involved in ribose, galactose and/or methyl galactoside import. Responsible for energy coupling to the transport system. The polypeptide is Putative ribose/galactose/methyl galactoside import ATP-binding protein 2 (Rhizobium etli (strain ATCC 51251 / DSM 11541 / JCM 21823 / NBRC 15573 / CFN 42)).